Here is a 577-residue protein sequence, read N- to C-terminus: Proton channel OTOP3 (577 aa).

Positions 1–46 (MASQTSAPAEPAPMPSPEAKTTEGASSYDQADMETKHAGSPCPPKQ) are disordered. At 1–69 (MASQTSAPAE…RDRQAQKAGQ (69 aa)) the chain is on the cytoplasmic side. The chain crosses the membrane as a helical span at residues 70-90 (LFSGLLALNVVFLGGAFICSM). Over 91–100 (IFNKVSVTLG) the chain is Extracellular. Residues 101 to 124 (DVWILLAALKVLSLLWLLYYTVGT) form a helical membrane-spanning segment. At 125–140 (TRKPHAVLYRDPHAGP) the chain is on the cytoplasmic side. A helical membrane pass occupies residues 141-162 (IWVRGSLVLFGSCTVCLNIFRM). Over 163–174 (GYDVSHIHCKSE) the chain is Extracellular. Residues 175–198 (VELIFPAIEIVFMIIQTWVLWRHC) form a helical membrane-spanning segment. Residues 199 to 206 (KDCVQVQT) lie on the Cytoplasmic side of the membrane. The chain crosses the membrane as a helical span at residues 207–229 (NFTRCGLMLTLATNLLMWVLAVT). Topologically, residues 230–276 (NDSMHREIEAELDALMEKFSGNGTNTCMCLNTTVCEVFRKGYLMLYP) are extracellular. Residues 277–293 (FSTEYCLICCAVLFVMW) form a helical membrane-spanning segment. Over 294-319 (KNVSRSLAAHTGAHPNRSPFRLHGTI) the chain is Cytoplasmic. The chain crosses the membrane as a helical span at residues 320-339 (FGPLLGLLALVAGVCVFVLF). The Extracellular segment spans residues 340–353 (QIEASGPDIARQYF). The chain crosses the membrane as a helical span at residues 354–376 (TLYYAFYVAVLPTMSLACLAGTA). Topologically, residues 377–394 (IHGLEERELDTLKNPTRS) are cytoplasmic. A helical membrane pass occupies residues 395-416 (LDVVLLMGAALGQMGIAYFSIV). Topologically, residues 417 to 427 (AIVATQPHELL) are extracellular. Residues 428–450 (NQLILAYSLLLILQHITQNLFII) traverse the membrane as a helical segment. Over 451–510 (EGLHRRPLWEPAVSGVMEKQDVELPRRGSLRELGQDLRRASRAYIHSFSHLNWKRRMLKE) the chain is Cytoplasmic. A helical transmembrane segment spans residues 511-528 (ISLFLILCNITLWMMPAF). Topologically, residues 529 to 547 (GIHPEFENGLEKDFYGYRT) are extracellular. Residues 548-570 (WFTIVNFGLPLGVFYRMHSVGGL) form a helical membrane-spanning segment. Residues 571-577 (VEVYLGA) are Cytoplasmic-facing.

The protein belongs to the otopetrin family. As to quaternary structure, homodimer. Expressed in epidermis, small intestine, stomach and retina.

It localises to the cell membrane. The enzyme catalyses H(+)(in) = H(+)(out). With respect to regulation, activated by extracellular acidification. Activated by Zn(2+) under non-acidic conditions. Functionally, proton-selective channel gated by extracellular protons. The protein is Proton channel OTOP3 of Mus musculus (Mouse).